Reading from the N-terminus, the 144-residue chain is Large ribosomal subunit protein uL15 (144 aa).

Positions 1 to 58 (MRLNTLAPAAGSKHAPKRVGRGIGSGLGKTGGRGHKGQKSRSGGKVRPGFEGGQMPLK) are disordered. Over residues 21-31 (RGIGSGLGKTG) the composition is skewed to gly residues. The segment covering 32–44 (GRGHKGQKSRSGG) has biased composition (basic residues).

The protein belongs to the universal ribosomal protein uL15 family. In terms of assembly, part of the 50S ribosomal subunit.

Binds to the 23S rRNA. The sequence is that of Large ribosomal subunit protein uL15 from Vibrio parahaemolyticus serotype O3:K6 (strain RIMD 2210633).